A 90-amino-acid polypeptide reads, in one-letter code: Small ribosomal subunit protein uS15 (90 aa).

It belongs to the universal ribosomal protein uS15 family. In terms of assembly, part of the 30S ribosomal subunit. Forms a bridge to the 50S subunit in the 70S ribosome, contacting the 23S rRNA.

Functionally, one of the primary rRNA binding proteins, it binds directly to 16S rRNA where it helps nucleate assembly of the platform of the 30S subunit by binding and bridging several RNA helices of the 16S rRNA. Its function is as follows. Forms an intersubunit bridge (bridge B4) with the 23S rRNA of the 50S subunit in the ribosome. This chain is Small ribosomal subunit protein uS15, found in Thermotoga maritima (strain ATCC 43589 / DSM 3109 / JCM 10099 / NBRC 100826 / MSB8).